Here is a 306-residue protein sequence, read N- to C-terminus: Putative dihydroorotate dehydrogenase A (fumarate) (306 aa).

Residues Ser-24 and 48-49 contribute to the FMN site; that span reads KS. Residues Lys-48, 72 to 76, and Asn-129 contribute to the substrate site; that span reads NAVGL. An FMN-binding site is contributed by Asn-129. Catalysis depends on Cys-132, which acts as the Nucleophile. FMN contacts are provided by Lys-167 and Ile-192. 193–194 contributes to the substrate binding site; sequence NS. FMN is bound by residues Gly-218 and 244–245; that span reads GG.

Belongs to the dihydroorotate dehydrogenase family. Type 1 subfamily. In terms of assembly, homodimer. FMN is required as a cofactor.

The protein resides in the cytoplasm. It catalyses the reaction (S)-dihydroorotate + fumarate = orotate + succinate. It participates in pyrimidine metabolism; UMP biosynthesis via de novo pathway. Functionally, catalyzes the conversion of dihydroorotate to orotate with fumarate as the electron acceptor. This chain is Putative dihydroorotate dehydrogenase A (fumarate) (pyrD), found in Aeropyrum pernix (strain ATCC 700893 / DSM 11879 / JCM 9820 / NBRC 100138 / K1).